The sequence spans 151 residues: 4-hydroxybenzoyl-CoA thioesterase (151 aa).

The active site involves Glu73. 100–102 (FFR) is a substrate binding site.

The protein belongs to the thioesterase PaaI family. Homotetramer.

The catalysed reaction is 4-hydroxybenzoyl-CoA + H2O = 4-hydroxybenzoate + CoA + H(+). The protein operates within xenobiotic degradation; 4-chlorobenzoate degradation; 4-hydroxybenzoate from 4-chlorobenzoate: step 3/3. This chain is 4-hydroxybenzoyl-CoA thioesterase, found in Arthrobacter globiformis.